Here is a 193-residue protein sequence, read N- to C-terminus: dCTP deaminase (193 aa).

DCTP is bound by residues 110-115 (RSSLAR), Asp128, 136-138 (VLE), Tyr171, Lys178, and Gln182. Glu138 functions as the Proton donor/acceptor in the catalytic mechanism. The tract at residues 174 to 193 (RKNAKYKDQQEAVASRISQD) is disordered.

It belongs to the dCTP deaminase family. Homotrimer.

The enzyme catalyses dCTP + H2O + H(+) = dUTP + NH4(+). It participates in pyrimidine metabolism; dUMP biosynthesis; dUMP from dCTP (dUTP route): step 1/2. Catalyzes the deamination of dCTP to dUTP. This is dCTP deaminase from Shewanella sp. (strain W3-18-1).